The following is a 254-amino-acid chain: Ciliary microtubule associated protein 1A (254 aa).

STPGR repeat units lie at residues 180–205 (PGPAAYRQTEVQVTKFKAPQYTMAAR) and 216–241 (PGPGAHSPEKVTLNKPCAPTVTFGIK). Residues 207–228 (EPPGDKTLKPGPGAHSPEKVTL) are disordered.

Belongs to the CIMAP family. As to quaternary structure, microtubule inner protein component of sperm flagellar doublet microtubules. As to expression, testis-specific (at protein level). Expression restricted to the germ cell fraction, absent in somatic cell fractions such as Sertoli and Leydig cells. Expression detected in the third week postpartum (23 days) after haploid germ cells developed, expression increased with age. Expressed in the tails of elongated spermatids sticking out toward the tubular lumen, and in cytoplasmic droplets still attached to the spermatid tail membrane. Expressed in the tails of mature sperm, from the connecting piece proximal to the head, along the middle and principal pieces, down to the distal end piece.

It is found in the cytoplasm. The protein localises to the cytoskeleton. It localises to the flagellum axoneme. Its function is as follows. Outer dense fibers are filamentous structures located on the outside of the axoneme in the midpiece and principal piece of the mammalian sperm tail. May help to maintain the passive elastic structures and elastic recoil of the sperm tail. The sequence is that of Ciliary microtubule associated protein 1A (Cimap1a) from Mus musculus (Mouse).